We begin with the raw amino-acid sequence, 775 residues long: Semaphorin-3E (775 aa).

The first 25 residues, 1 to 25 (MAPAGHILTLLLWGHLLELWTPGHS), serve as a signal peptide directing secretion. The region spanning 32-516 (RLRLSHKELL…SASAVAQVRF (485 aa)) is the Sema domain. Asparagine 44 carries N-linked (GlcNAc...) asparagine glycosylation. The cysteines at positions 105 and 115 are disulfide-linked. N-linked (GlcNAc...) asparagine glycosylation is present at asparagine 126. Cysteines 133 and 142 form a disulfide. N-linked (GlcNAc...) asparagine glycans are attached at residues asparagine 175 and asparagine 330. 3 disulfide bridges follow: cysteine 270/cysteine 382, cysteine 294/cysteine 342, and cysteine 519/cysteine 537. The Ig-like C2-type domain maps to 581–669 (ALDRTEERLA…NFVHTVRKIT (89 aa)). N-linked (GlcNAc...) asparagine glycosylation occurs at asparagine 596. A disulfide bridge links cysteine 654 with cysteine 729.

It belongs to the semaphorin family. Interacts with PLXND1. In terms of tissue distribution, detected in neurons in the thalamus. Detected in embryonic vasculature. Developing lungs, developing skeletal elements and ventral horns of the developing neural tube. Correlates positively with tumor progression.

It localises to the secreted. Its function is as follows. Plays an important role in signaling via the cell surface receptor PLXND1. Mediates reorganization of the actin cytoskeleton, leading to the retraction of cell projections. Promotes focal adhesion disassembly and inhibits adhesion of endothelial cells to the extracellular matrix. Regulates angiogenesis, both during embryogenesis and after birth. Can down-regulate sprouting angiogenesis. Required for normal vascular patterning during embryogenesis. Plays an important role in ensuring the specificity of synapse formation. In Mus musculus (Mouse), this protein is Semaphorin-3E (Sema3e).